The sequence spans 205 residues: Thymidine kinase (205 aa).

Residues 9-16 (SAMNAGKS) and 87-90 (DECQ) contribute to the ATP site. The active-site Proton acceptor is the Glu-88. Zn(2+)-binding residues include Cys-145, Cys-147, Cys-182, and His-185.

It belongs to the thymidine kinase family. As to quaternary structure, homotetramer.

Its subcellular location is the cytoplasm. The enzyme catalyses thymidine + ATP = dTMP + ADP + H(+). The chain is Thymidine kinase from Shigella dysenteriae serotype 1 (strain Sd197).